The primary structure comprises 352 residues: NADP-dependent oxidoreductase RED1 (352 aa).

Residues 166 to 169 (GAVG), Lys-192, Tyr-208, Asn-231, and 285 to 287 (FIV) contribute to the NADP(+) site.

Belongs to the NADP-dependent oxidoreductase L4BD family.

The protein operates within mycotoxin biosynthesis. Functionally, NADP-dependent oxidoreductase; part of the Tox1B locus, one of the 2 loci that mediate the biosynthesis of T-toxin, a family of linear polyketides 37 to 45 carbons in length, of which the major component is 41 carbons, and which leads to high virulence to maize. One of the PKSs (PKS1 or PKS2) could synthesize a precursor, used subsequently by the other PKS as starter unit, to add additional carbons. Variability in the length of the final carbon backbone C35-47 could be achieved by varying the number of condensation cycles, or use of different starter or extender units or might be due to decarboxylation of the penultimate product, catalyzed by DEC1. Additional proteins are required for the biosynthesis of T-toxin, including oxidoreductases RED1, RED2, RED3, LAM1 and OXI1, as well as esterase TOX9. This is NADP-dependent oxidoreductase RED1 from Cochliobolus heterostrophus (strain C4 / ATCC 48331 / race T) (Southern corn leaf blight fungus).